We begin with the raw amino-acid sequence, 283 residues long: Orotidine 5'-phosphate decarboxylase (283 aa).

Catalysis depends on lysine 97, which acts as the Proton donor.

This sequence belongs to the OMP decarboxylase family. Type 2 subfamily.

The enzyme catalyses orotidine 5'-phosphate + H(+) = UMP + CO2. The protein operates within pyrimidine metabolism; UMP biosynthesis via de novo pathway; UMP from orotate: step 2/2. This Clostridium botulinum (strain Okra / Type B1) protein is Orotidine 5'-phosphate decarboxylase.